A 1045-amino-acid polypeptide reads, in one-letter code: MEAKVRPSRRSRAQRDRGRRREAARDARAQSPSSGDEPEPSPGKENAGLRGAPPRGAAPAPRTARPPRRRRRESSSQEEEVIDGFAIASFSTLEALEKDMALKPHERKEKWERRLIKKPRESETCPPAEPSENRRPLEAGSPGQDLEPACDGARKVPLQPSKQMKVTVSKGGDRDSDDDSVLEATSSRDPLSDSSAHAVSGRGYSCDSESGPDDKASVGSEKLFAPGTDKGPALEKSEAKAGPVPKVSGLERSRELSAESFLPTASPAPHAAPCPGPPPGSRANPLVKKEPPAPHRHTPQPPPPQPRGLLPTHVPASLGAFAGHSQAAANGLHGLSRSSSAPLGLGKHVSLSPHGPGPHLSTSHLALRSQAQHQLHAAMFAAPPTLPPPPALPASSLVLPGHPADHELLRQELNTRFLVQSAERPGASLGPGALLRAEFHQHQHTHQHTHQHTHQHQHTFAPFPAGLPPTPPAAPPPFDKYAPKLDSPYFRHSSVSFFPSFPPAIPGLPTLLPHPGPFGSLQGAFQPKVSDPYRAVVKVSTCWEGPWQGRTLVPPGRPRGARDSRSLQKTWVGVAPAPLSASILSQKPGRWCAVHVQIAWQIYRHQQKIKEMQLDPHKLEVGAKLDLFGRPPAPGVFAGFHYPQDLARPLFPSTGAAHPASNPFGPSAHPGSFLPTGPLTDPFSRPSTFGGLGSLSSHAFGGLGSHALAPGGSIFAPKEGSSVHGLPSPHEAWNRLHRAPPSFPAPPPWPKSVDAERVSALTNHDREPDNGKEEQERDLLEKTRLLSRASPATPAGHPVSGLLLRAQSELGRSGAPAEREAEPRVKESRSPAKEEAAKMPARASPPHSKAAPGDVKVKEERGEDEASEPPAGGLHPAPLQLGLGRERLGAPGFAWEPFRGLELPRRAFPAAAPAPGSAALLEPPERPYRDREPHGYSPERLRGELERARAPHLPPAAPALDGALLPSLGALHFPRLSPAALHNGLLARTPPAAAALGAPPPLVTAAGPPTPPGPPRSRTTPLGGLGPGEARDYSPSRNPPEVEAR.

Basic residues predominate over residues 1–12; the sequence is MEAKVRPSRRSR. 2 disordered regions span residues 1–86 and 99–315; these read MEAK…DGFA and DMAL…THVP. Basic and acidic residues predominate over residues 13–28; the sequence is AQRDRGRRREAARDAR. Low complexity predominate over residues 48–63; sequence GLRGAPPRGAAPAPRT. The span at 99 to 123 shows a compositional bias: basic and acidic residues; that stretch reads DMALKPHERKEKWERRLIKKPRESE. Residues 183 to 197 show a composition bias toward polar residues; the sequence is EATSSRDPLSDSSAH. Pro residues predominate over residues 270–280; that stretch reads HAAPCPGPPPG. Ser340 is modified (phosphoserine). Basic residues predominate over residues 443 to 457; that stretch reads QHTHQHTHQHTHQHQ. 2 disordered regions span residues 443-462 and 719-753; these read QHTHQHTHQHTHQHQHTFAP and EGSSVHGLPSPHEAWNRLHRAPPSFPAPPPWPKSV. Positions 741 to 750 are enriched in pro residues; it reads PSFPAPPPWP. Phosphoserine is present on Ser790. Disordered stretches follow at residues 809–880 and 910–961; these read ELGR…APLQ and AAAP…PALD. Basic and acidic residues predominate over residues 817-837; it reads AEREAEPRVKESRSPAKEEAA. Lys858 is covalently cross-linked (Glycyl lysine isopeptide (Lys-Gly) (interchain with G-Cter in SUMO2)). Residues 910–922 are compositionally biased toward low complexity; that stretch reads AAAPAPGSAALLE. Basic and acidic residues predominate over residues 923-949; the sequence is PPERPYRDREPHGYSPERLRGELERAR. 2 positions are modified to phosphoserine: Ser937 and Ser977. Thr989 and Thr1010 each carry phosphothreonine. The interval 991–1045 is disordered; it reads PAAAALGAPPPLVTAAGPPTPPGPPRSRTTPLGGLGPGEARDYSPSRNPPEVEAR. Over residues 998-1015 the composition is skewed to pro residues; that stretch reads APPPLVTAAGPPTPPGPP. A compositionally biased stretch (basic and acidic residues) spans 1029–1045; sequence EARDYSPSRNPPEVEAR.

Belongs to the AUTS2 family.

This is Fibrosin-1-like protein (FBRSL1) from Homo sapiens (Human).